Consider the following 227-residue polypeptide: Cytochrome c oxidase subunit 2 (227 aa).

At 1–14 (MAYTFQLGLQDATS) the chain is on the mitochondrial intermembrane side. A helical membrane pass occupies residues 15 to 45 (PIMEELTNFHDHTLMIVFLISSLVLYVISLM). At 46–59 (LTTKLTHTNTMDAQ) the chain is on the mitochondrial matrix side. The helical transmembrane segment at 60–87 (EVETIWTILPAVILILIALPSLRILYMM) threads the bilayer. At 88 to 227 (DEINNPVLTV…HFENWSASMI (140 aa)) the chain is on the mitochondrial intermembrane side. Residues histidine 161, cysteine 196, glutamate 198, cysteine 200, histidine 204, and methionine 207 each contribute to the Cu cation site. Glutamate 198 is a binding site for Mg(2+).

This sequence belongs to the cytochrome c oxidase subunit 2 family. Component of the cytochrome c oxidase (complex IV, CIV), a multisubunit enzyme composed of 14 subunits. The complex is composed of a catalytic core of 3 subunits MT-CO1, MT-CO2 and MT-CO3, encoded in the mitochondrial DNA, and 11 supernumerary subunits COX4I, COX5A, COX5B, COX6A, COX6B, COX6C, COX7A, COX7B, COX7C, COX8 and NDUFA4, which are encoded in the nuclear genome. The complex exists as a monomer or a dimer and forms supercomplexes (SCs) in the inner mitochondrial membrane with NADH-ubiquinone oxidoreductase (complex I, CI) and ubiquinol-cytochrome c oxidoreductase (cytochrome b-c1 complex, complex III, CIII), resulting in different assemblies (supercomplex SCI(1)III(2)IV(1) and megacomplex MCI(2)III(2)IV(2)). Found in a complex with TMEM177, COA6, COX18, COX20, SCO1 and SCO2. Interacts with TMEM177 in a COX20-dependent manner. Interacts with COX20. Interacts with COX16. The cofactor is Cu cation.

The protein resides in the mitochondrion inner membrane. The enzyme catalyses 4 Fe(II)-[cytochrome c] + O2 + 8 H(+)(in) = 4 Fe(III)-[cytochrome c] + 2 H2O + 4 H(+)(out). Its function is as follows. Component of the cytochrome c oxidase, the last enzyme in the mitochondrial electron transport chain which drives oxidative phosphorylation. The respiratory chain contains 3 multisubunit complexes succinate dehydrogenase (complex II, CII), ubiquinol-cytochrome c oxidoreductase (cytochrome b-c1 complex, complex III, CIII) and cytochrome c oxidase (complex IV, CIV), that cooperate to transfer electrons derived from NADH and succinate to molecular oxygen, creating an electrochemical gradient over the inner membrane that drives transmembrane transport and the ATP synthase. Cytochrome c oxidase is the component of the respiratory chain that catalyzes the reduction of oxygen to water. Electrons originating from reduced cytochrome c in the intermembrane space (IMS) are transferred via the dinuclear copper A center (CU(A)) of subunit 2 and heme A of subunit 1 to the active site in subunit 1, a binuclear center (BNC) formed by heme A3 and copper B (CU(B)). The BNC reduces molecular oxygen to 2 water molecules using 4 electrons from cytochrome c in the IMS and 4 protons from the mitochondrial matrix. The sequence is that of Cytochrome c oxidase subunit 2 (MT-CO2) from Niviventer culturatus (Oldfield white-bellied rat).